The primary structure comprises 145 residues: Large-conductance mechanosensitive channel (145 aa).

Transmembrane regions (helical) follow at residues 16 to 36 (VVDL…VTSF) and 83 to 103 (GVFI…FMVI).

The protein belongs to the MscL family. Homopentamer.

Its subcellular location is the cell inner membrane. In terms of biological role, channel that opens in response to stretch forces in the membrane lipid bilayer. May participate in the regulation of osmotic pressure changes within the cell. In Geobacter metallireducens (strain ATCC 53774 / DSM 7210 / GS-15), this protein is Large-conductance mechanosensitive channel.